Reading from the N-terminus, the 184-residue chain is UPF0397 protein SAR2767 (184 aa).

Transmembrane regions (helical) follow at residues Val-11–Pro-31, Ala-44–Ile-64, Ala-77–Leu-97, Gly-117–Ile-137, and Gln-148–Leu-168.

It belongs to the UPF0397 family.

It localises to the cell membrane. In Staphylococcus aureus (strain MRSA252), this protein is UPF0397 protein SAR2767.